Reading from the N-terminus, the 306-residue chain is ORF-B protein (306 aa).

3 helical membrane-spanning segments follow: residues 92–112 (MIQW…FPFI), 120–140 (LTHL…VFGW), and 161–181 (VIEW…IVVS).

Interacts with host RACK1.

It localises to the host cytoplasm. The protein resides in the host cell membrane. The chain is ORF-B protein from Sander vitreus (Walleye).